The sequence spans 526 residues: Microphthalmia-associated transcription factor (526 aa).

The residue at position 5 (Ser5) is a Phosphoserine; by MTOR. Disordered regions lie at residues Glu20–Thr54 and Val155–Asn179. The span at Ser34 to Ser44 shows a compositional bias: low complexity. The residue at position 180 (Ser180) is a Phosphoserine; by MAPK. Positions Asp224–Glu291 are transactivation. Phosphoserine is present on Ser280. Residue Lys289 forms a Glycyl lysine isopeptide (Lys-Gly) (interchain with G-Cter in SUMO) linkage. Positions Gln311–Leu364 constitute a bHLH domain. The stretch at Lys355–Ala401 forms a coiled coil. The tract at residues Leu374–Leu395 is leucine-zipper. Positions Ala401–Cys431 are DNA-binding regulation. Ser405 is subject to Phosphoserine; by GSK3. Phosphoserine is present on Ser414. A Glycyl lysine isopeptide (Lys-Gly) (interchain with G-Cter in SUMO) cross-link involves residue Lys423. A Phosphoserine modification is found at Ser491. The disordered stretch occupies residues Thr496–Cys526. Over residues Ala507–Ala519 the composition is skewed to low complexity. A Phosphoserine; by RPS6KA1 modification is found at Ser516.

It belongs to the MiT/TFE family. In terms of assembly, homodimer or heterodimer; dimerization is mediated via the coiled coil region. Efficient DNA binding requires dimerization with another bHLH protein. Binds DNA in the form of homodimer or heterodimer with either TFE3, TFEB or TFEC. Interacts with small GTPases Rag (RagA/RRAGA, RagB/RRAGB, RagC/RRAGC and/or RagD/RRAGD); promoting its recruitment to lysosomal membrane in the presence of nutrients. Interacts with KARS1. Identified in a complex with HINT1 and CTNNB1. Interacts with VSX2. Post-translationally, when nutrients are present, phosphorylation by MTOR at Ser-5 via non-canonical mTORC1 pathway promotes ubiquitination by the SCF(BTRC) complex, followed by degradation. Phosphorylation at Ser-405 significantly enhances the ability to bind the tyrosinase promoter. Phosphorylation by MARK3/cTAK1 at Ser-280 promotes association with 14-3-3/YWHA adapters and retention in the cytosol. Phosphorylated at Ser-180 and Ser-516 following KIT signaling, triggering a short live activation: Phosphorylation at Ser-180 and Ser-516 by MAPK and RPS6KA1, respectively, activate the transcription factor activity but also promote ubiquitination and subsequent degradation by the proteasome. Phosphorylated in response to blue light (415nm). In terms of processing, ubiquitinated by the SCF(BTRC) and SCF(FBXW11) complexes following phosphorylation ar Ser-5 by MTOR, leading to its degradation by the proteasome. Ubiquitinated following phosphorylation at Ser-180, leading to subsequent degradation by the proteasome. Deubiquitinated by USP13, preventing its degradation. In the adult, expressed at high levels in the heart, skin, skeletal muscle, intestine, stomach, kidney, ovary, lung, spleen and brain. In the embryo, expressed in developing eye, ear, skin and heart. Isoform M is expressed in melanocytes and also in the embryonic and adult heart while isoform A and isoform H are more widely expressed.

It localises to the nucleus. It is found in the cytoplasm. Its subcellular location is the lysosome membrane. In terms of biological role, transcription factor that acts as a master regulator of melanocyte survival and differentiation as well as melanosome biogenesis. Binds to M-boxes (5'-TCATGTG-3') and symmetrical DNA sequences (E-boxes) (5'-CACGTG-3') found in the promoter of pigmentation genes, such as tyrosinase (TYR). Involved in the cellular response to amino acid availability by acting downstream of MTOR: in the presence of nutrients, MITF phosphorylation by MTOR promotes its inactivation. Upon starvation or lysosomal stress, inhibition of MTOR induces MITF dephosphorylation, resulting in transcription factor activity. Plays an important role in melanocyte development by regulating the expression of tyrosinase (TYR) and tyrosinase-related protein 1 (TYRP1). Plays a critical role in the differentiation of various cell types, such as neural crest-derived melanocytes, mast cells, osteoclasts and optic cup-derived retinal pigment epithelium. The sequence is that of Microphthalmia-associated transcription factor (Mitf) from Mus musculus (Mouse).